The sequence spans 700 residues: MAPQKHGGSSAPSGKPSAAASLLPVRKPKMEQIQADHELFLQAFEKPTQIYRFLRTRNLIAPIFLHRTLTYMSHRNSRSNAKRKTFKVNDLLLKVEKMKGDQESHSVSAHLQLTFTGFFHKIDKPSQNSENEQSSVTLEVLLVKVCHKKRKDVSCPIRQVPTGKKQVPLNPELNPAKPSTFPSLAVSSNEFEPSNSHMVKSYSLLFRVTRQGRRDFNGLTNGETNENIDVSEEPPARRKRNSSNRDEGDKTFVAQMTVFDKNRRLQLLDGEYEVAMQEMEDCPVNKKRATWETILDGKRLPPFETFSQGPTLQFTLRWTNDTPDKSTAPIAKPLATRNSESLPQEHKPSSVKPAQTVAVKESLSSDLQARKERDVSSEPRQKLRIFYQFLYNNNTRQQTEARDDLHCPWCTLNCRKLYSLLKHLKLCHSRFIFNYVYHPKGARIDVSINECYDGSYAGNPQDIHRQPGFAFSRNGPVKRTPITHILVCRPKRTKASMSEFLESEDGEVEQQRTYSSGHNRLYFHSDTCLPLRPQEMDVDSEDEKDPEWLREKTITQIEEFSDVNEGEKEVMKMWNLHVMKHGFIADNQMNHGCMLFVDNYGPQIIQKNLCRNFMLHLVSMHDFNLISITTIDKAVSRLREIQQKVERDECLAPPSDEAFEEPNRTTSSSSSFMETNGKDRVVENDCVSGQPPKHSKKQKP.

2 disordered regions span residues 215–250 (DFNG…EGDK) and 319–376 (TNDT…RDVS). Residues 218–228 (GLTNGETNENI) show a composition bias toward polar residues. The C2H2-type zinc finger occupies 405–428 (LHCPWCTLNCRKLYSLLKHLKLCH). Residues 520–596 (RLYFHSDTCL…NQMNHGCMLF (77 aa)) are VEFS-box. Positions 651–700 (LAPPSDEAFEEPNRTTSSSSSFMETNGKDRVVENDCVSGQPPKHSKKQKP) are disordered. The segment covering 664–674 (RTTSSSSSFME) has biased composition (polar residues).

The protein belongs to the VEFS (VRN2-EMF2-FIS2-SU(Z)12) family. In terms of assembly, component of the prc2/eed-ezh2 complex.

Its subcellular location is the nucleus. Polycomb group (PcG) protein. Component of the prc2/eed-ezh2 complex, which methylates 'Lys-9' (H3K9me) and 'Lys-27' (H3K27me) of histone H3, leading to transcriptional repression of the affected target gene. This chain is Polycomb protein suz12 (suz12), found in Xenopus tropicalis (Western clawed frog).